The primary structure comprises 212 residues: Large ribosomal subunit protein uL3 (212 aa).

The residue at position 152 (glutamine 152) is an N5-methylglutamine.

It belongs to the universal ribosomal protein uL3 family. In terms of assembly, part of the 50S ribosomal subunit. Forms a cluster with proteins L14 and L19. In terms of processing, methylated by PrmB.

In terms of biological role, one of the primary rRNA binding proteins, it binds directly near the 3'-end of the 23S rRNA, where it nucleates assembly of the 50S subunit. The chain is Large ribosomal subunit protein uL3 from Marinomonas sp. (strain MWYL1).